The primary structure comprises 141 residues: MERYQELTVLLLLLLLEGGSWGAGHLRPLCRPTNATLAAESDACPVCVTFTTTICAGYCPSMVRVLPAALPPGPQLVCTYRELSFSSIRLPGCPPGVDPIFSFPVALSCSCGSCRLSHSDCGGPRARPHLCTRPHLSLHLL.

Residues 1 to 22 (MERYQELTVLLLLLLLEGGSWG) form the signal peptide. 6 disulfide bridges follow: Cys-30–Cys-78, Cys-44–Cys-93, Cys-47–Cys-131, Cys-55–Cys-109, Cys-59–Cys-111, and Cys-114–Cys-121. N-linked (GlcNAc...) asparagine glycosylation is present at Asn-34.

The protein belongs to the glycoprotein hormones subunit beta family. Heterodimer of a common alpha chain and a unique beta chain which confers biological specificity to thyrotropin, lutropin, follitropin and gonadotropin.

The protein localises to the secreted. In terms of biological role, promotes spermatogenesis and ovulation by stimulating the testes and ovaries to synthesize steroids. This is Lutropin subunit beta (LHB) from Trichosurus vulpecula (Brush-tailed possum).